The following is a 279-amino-acid chain: Digeranylgeranylglyceryl phosphate synthase (279 aa).

The next 8 membrane-spanning stretches (helical) occupy residues 14–34 (VKNCLTASFGTIIGGLIASNF), 36–56 (FGLIGYILLASLIVFLVCGFG), 94–114 (LMISGIIISLFNMICFAIALI), 131–153 (IIGNLIVAYLTGSIFIFGGASVG), 157–175 (ITLILFLCALFATWSREII), 201–221 (IFVAIGFLLCSILLSPLPYIL), 224–244 (FGAPYLMAIMICNVLFILAVL), and 259–279 (SKYIKIIMNLVLLSFVIGSLM).

This sequence belongs to the UbiA prenyltransferase family. DGGGP synthase subfamily. Mg(2+) is required as a cofactor.

The protein localises to the cell membrane. It catalyses the reaction sn-3-O-(geranylgeranyl)glycerol 1-phosphate + (2E,6E,10E)-geranylgeranyl diphosphate = 2,3-bis-O-(geranylgeranyl)-sn-glycerol 1-phosphate + diphosphate. The protein operates within membrane lipid metabolism; glycerophospholipid metabolism. Prenyltransferase that catalyzes the transfer of the geranylgeranyl moiety of geranylgeranyl diphosphate (GGPP) to the C2 hydroxyl of (S)-3-O-geranylgeranylglyceryl phosphate (GGGP). This reaction is the second ether-bond-formation step in the biosynthesis of archaeal membrane lipids. The polypeptide is Digeranylgeranylglyceryl phosphate synthase (Methanococcus aeolicus (strain ATCC BAA-1280 / DSM 17508 / OCM 812 / Nankai-3)).